We begin with the raw amino-acid sequence, 282 residues long: Glutamate--LysW ligase ArgX (282 aa).

ATP contacts are provided by residues lysine 87, lysine 127, 131 to 137 (GSWGRLV), and 167 to 178 (QEYINYKSRDIR). The 187-residue stretch at 91 to 277 (YSKLYREGIP…VAEELVSYVK (187 aa)) folds into the ATP-grasp domain. Residue arginine 192 coordinates substrate. Asparagine 202 is an ATP binding site. 203–204 (IA) contacts substrate. Residues aspartate 237, glutamate 250, and asparagine 252 each contribute to the Mg(2+) site. 256 to 260 (EFKGF) contributes to the substrate binding site. A GF motif that is essential for ArgX substrate specificity motif is present at residues 259–260 (GF).

Belongs to the RimK family. LysX subfamily. As to quaternary structure, homotetramer. Interacts with LysW. Mg(2+) serves as cofactor.

It carries out the reaction [amino-group carrier protein]-C-terminal-L-glutamate + L-glutamate + ATP = [amino-group carrier protein]-C-terminal-gamma-(L-glutamyl)-L-glutamate + ADP + phosphate + H(+). It participates in amino-acid biosynthesis; L-arginine biosynthesis. In terms of biological role, catalyzes the ATP-dependent formation of a covalent bond between the amino group of glutamate and the gamma-carboxyl group of the C-terminal glutamate residue in LysW. The protein is Glutamate--LysW ligase ArgX of Sulfolobus acidocaldarius (strain ATCC 33909 / DSM 639 / JCM 8929 / NBRC 15157 / NCIMB 11770).